The sequence spans 179 residues: Cell division protein ZapC (179 aa).

This sequence belongs to the ZapC family. Interacts directly with FtsZ.

The protein localises to the cytoplasm. In terms of biological role, contributes to the efficiency of the cell division process by stabilizing the polymeric form of the cell division protein FtsZ. Acts by promoting interactions between FtsZ protofilaments and suppressing the GTPase activity of FtsZ. This Ferrimonas balearica (strain DSM 9799 / CCM 4581 / KCTC 23876 / PAT) protein is Cell division protein ZapC.